A 72-amino-acid chain; its full sequence is Translation initiation factor IF-1 (72 aa).

The S1-like domain maps to 1–72; sequence MSKEEVLEFS…TKGRITYRYK (72 aa).

Belongs to the IF-1 family. In terms of assembly, component of the 30S ribosomal translation pre-initiation complex which assembles on the 30S ribosome in the order IF-2 and IF-3, IF-1 and N-formylmethionyl-tRNA(fMet); mRNA recruitment can occur at any time during PIC assembly.

It localises to the cytoplasm. In terms of biological role, one of the essential components for the initiation of protein synthesis. Stabilizes the binding of IF-2 and IF-3 on the 30S subunit to which N-formylmethionyl-tRNA(fMet) subsequently binds. Helps modulate mRNA selection, yielding the 30S pre-initiation complex (PIC). Upon addition of the 50S ribosomal subunit IF-1, IF-2 and IF-3 are released leaving the mature 70S translation initiation complex. The chain is Translation initiation factor IF-1 from Bartonella quintana (strain Toulouse) (Rochalimaea quintana).